We begin with the raw amino-acid sequence, 494 residues long: MAFNFIRAAAAGAAMALCGVGSVHAAVNLPALKIDKTQTTVSGLSSGGFMAVQLHVAYSATFAKGAGVVAGGPFYCAEGSIVNATGRCMASPAGIPTSTLVSTTNTWASQGVIDPVANLQNSKVYLFSGTLDSVVKTGVMDALRTYYNSFVPAANVVYKKDIAAEHAMVTDDYGNACSTKGAPYISDCNFDLAGAMLQHLYGTLNARNNATLPTGNYIEFNQSEFITNHGMATTGWAYVPQACQAGGTATCKLHVVLHGCKQNIGDVQQQYVRNTGYNRWADTNNIVMLYPQTSTAATNSCWDWWGYDSANYSKKSGPQMAAIKAMVDRVSSGTGGTTPPDPVALPAPTGVSTSGATASSMAIGWAAVMGAASYNVYRNANKVNALPVTATSYTDTGLAASTTYSWTVRAADANGAEGATSAAASGTTLAASGGGTATCTTASNYAHTLAGRAYAAGGYTYALGSNQNMGLWNVFVTNTLKQTSTNYYVIGTCP.

The first 25 residues, 1-25, serve as a signal peptide directing secretion; that stretch reads MAFNFIRAAAAGAAMALCGVGSVHA. S45 (nucleophile) is an active-site residue. Residues D132 and H166 each act as charge relay system in the active site. A Fibronectin type-III domain is found at 347-431; the sequence is APTGVSTSGA…AAASGTTLAA (85 aa).

Belongs to the AB hydrolase superfamily. Lipase family.

The protein resides in the secreted. It carries out the reaction [(3R)-hydroxybutanoate](n) + H2O = [(3R)-hydroxybutanoate](n-2) + (3R)-hydroxybutanoate dimer + H(+). The enzyme catalyses [(3R)-hydroxybutanoate](n) + H2O = [(3R)-hydroxybutanoate](n-1) + (R)-3-hydroxybutanoate + H(+). It catalyses the reaction (3R)-hydroxybutanoate dimer + H2O = 2 (R)-3-hydroxybutanoate + H(+). In terms of biological role, catalyzes the hydrolysis of poly(3-hydroxybutyrate) (PHB) film, producing the monomer and dimer of 3-hydroxybutyrate (3HB), while the 3HB trimer and tetramer are not formed. The polypeptide is Poly(3-hydroxybutyrate) depolymerase (Delftia acidovorans (Pseudomonas acidovorans)).